Consider the following 530-residue polypeptide: Ataxin-10 homolog (530 aa).

Belongs to the ataxin-10 family.

Its subcellular location is the cytoplasm. In terms of biological role, may play a role in the regulation of cytokinesis. The sequence is that of Ataxin-10 homolog (CTR86) from Candida glabrata (strain ATCC 2001 / BCRC 20586 / JCM 3761 / NBRC 0622 / NRRL Y-65 / CBS 138) (Yeast).